Reading from the N-terminus, the 238-residue chain is Small proline-rich protein 3 (238 aa).

Residues 1-67 (MSSYQQKQPF…CSTKVPEPGN (67 aa)) are disordered. An N-acetylserine modification is found at serine 2. 21 repeat units span residues 52 to 59 (TKIPEPCS), 60 to 67 (TKVPEPGN), 68 to 75 (TVVLEPDY), 76 to 83 (TTMPGPCS), 84 to 91 (TNITEPDY), 92 to 99 (TTIPGPCS), 100 to 107 (TNITEPDY), 108 to 115 (TTIPGPCS), 116 to 123 (TNIPGPDR), 124 to 131 (TVVPGSCS), 132 to 139 (TNITEPDY), 140 to 147 (TTIPGPSS), 148 to 155 (TKIPDPGC), 156 to 163 (AMVPGPSP), 164 to 175 (SSTSEPSSEPCS), 176 to 183 (INVREPGY), 184 to 191 (MNASEPTH), 192 to 199 (AKVPDQGY), 200 to 207 (TKIPDQGS), 208 to 215 (SKVPEPCQ), and 216 to 223 (SRVPEVCP). A 21 X 8 AA approximate tandem repeats region spans residues 52-223 (TKIPEPCSTK…CQSRVPEVCP (172 aa)). The segment at 110–238 (IPGPCSTNIP…VSAKQKTKQK (129 aa)) is disordered. Residues 163–175 (PSSTSEPSSEPCS) are compositionally biased toward low complexity.

The protein belongs to the cornifin (SPRR) family.

It is found in the cytoplasm. Cross-linked envelope protein of keratinocytes. The sequence is that of Small proline-rich protein 3 (Sprr3) from Mus musculus (Mouse).